The sequence spans 446 residues: Exodeoxyribonuclease 7 large subunit (446 aa).

Belongs to the XseA family. Heterooligomer composed of large and small subunits.

The protein resides in the cytoplasm. It carries out the reaction Exonucleolytic cleavage in either 5'- to 3'- or 3'- to 5'-direction to yield nucleoside 5'-phosphates.. Its function is as follows. Bidirectionally degrades single-stranded DNA into large acid-insoluble oligonucleotides, which are then degraded further into small acid-soluble oligonucleotides. The polypeptide is Exodeoxyribonuclease 7 large subunit (Streptococcus agalactiae serotype III (strain NEM316)).